The chain runs to 283 residues: MAVKVITDSTSCIPKDLAEKYGVEIVSLSVIMNGESYKEVDIDSEAFYDELAKCDKLPTSSQPPMDEFYNAFEKFAKDGHDIVAAFISSKLSGTYTTSHIIKDMILEKYPDVKIDLIDSQTSVMALGIGVLEGAKAAQEGKDFNEVSKIVRNTIEESEIIFVPGTLENLKKGGRIGGAAALFGKMLKINPILTVKEGAVVVMDKVRTKKRAIDKIVEVVKQDLKEKGIKQAVVCHILAEDEAKDLAKRLKEELDLDSMIGEISAVIGVHVGVKSVGIAYARES.

Residues 3–281 (VKVITDSTSC…VKSVGIAYAR (279 aa)) enclose the DegV domain. Hexadecanoate is bound by residues S60 and S92.

Its function is as follows. May bind long-chain fatty acids, such as palmitate, and may play a role in lipid transport or fatty acid metabolism. The sequence is that of DegV domain-containing protein CPE0304 from Clostridium perfringens (strain 13 / Type A).